The primary structure comprises 142 residues: Endoribonuclease YbeY (142 aa).

His107, His111, and Asp117 together coordinate Zn(2+).

It belongs to the endoribonuclease YbeY family. Zn(2+) serves as cofactor.

The protein localises to the cytoplasm. Its function is as follows. Single strand-specific metallo-endoribonuclease involved in late-stage 70S ribosome quality control and in maturation of the 3' terminus of the 16S rRNA. This is Endoribonuclease YbeY from Parabacteroides distasonis (strain ATCC 8503 / DSM 20701 / CIP 104284 / JCM 5825 / NCTC 11152).